We begin with the raw amino-acid sequence, 493 residues long: UDP-N-acetylmuramoylalanine--D-glutamate ligase (493 aa).

126 to 132 (GTNGKTT) contributes to the ATP binding site.

It belongs to the MurCDEF family.

It localises to the cytoplasm. The catalysed reaction is UDP-N-acetyl-alpha-D-muramoyl-L-alanine + D-glutamate + ATP = UDP-N-acetyl-alpha-D-muramoyl-L-alanyl-D-glutamate + ADP + phosphate + H(+). It participates in cell wall biogenesis; peptidoglycan biosynthesis. Cell wall formation. Catalyzes the addition of glutamate to the nucleotide precursor UDP-N-acetylmuramoyl-L-alanine (UMA). The polypeptide is UDP-N-acetylmuramoylalanine--D-glutamate ligase (Mycolicibacterium smegmatis (strain ATCC 700084 / mc(2)155) (Mycobacterium smegmatis)).